The primary structure comprises 359 residues: Zinc finger CCCH domain-containing protein 20 (359 aa).

C3H1-type zinc fingers lie at residues 75 to 107, 119 to 145, and 153 to 177; these read TCDHFRMYEFKVRRCARGRSHDWTECPYAHPGE, YSGTACPEFRKGCCKRGDACEFSHGVF, and RYRTQPCKDGGNCRRRVCFFAHSPD. Disordered regions lie at residues 207–226 and 334–359; these read SISPSSNSPPVSPRGDSDSS and MGRIEPDPDQGAGDTPDVGWVSDLVM.

In Arabidopsis thaliana (Mouse-ear cress), this protein is Zinc finger CCCH domain-containing protein 20.